The primary structure comprises 513 residues: ATP synthase subunit alpha (513 aa).

ATP is bound at residue 169 to 176 (GDRQTGKT).

Belongs to the ATPase alpha/beta chains family. As to quaternary structure, F-type ATPases have 2 components, CF(1) - the catalytic core - and CF(0) - the membrane proton channel. CF(1) has five subunits: alpha(3), beta(3), gamma(1), delta(1), epsilon(1). CF(0) has three main subunits: a(1), b(2) and c(9-12). The alpha and beta chains form an alternating ring which encloses part of the gamma chain. CF(1) is attached to CF(0) by a central stalk formed by the gamma and epsilon chains, while a peripheral stalk is formed by the delta and b chains.

Its subcellular location is the cell inner membrane. It catalyses the reaction ATP + H2O + 4 H(+)(in) = ADP + phosphate + 5 H(+)(out). In terms of biological role, produces ATP from ADP in the presence of a proton gradient across the membrane. The alpha chain is a regulatory subunit. The chain is ATP synthase subunit alpha from Ruthia magnifica subsp. Calyptogena magnifica.